The chain runs to 622 residues: 1,4-alpha-glucan branching enzyme GlgB (622 aa).

Aspartate 300 (nucleophile) is an active-site residue. The Proton donor role is filled by glutamate 351.

It belongs to the glycosyl hydrolase 13 family. GlgB subfamily. In terms of assembly, monomer.

It carries out the reaction Transfers a segment of a (1-&gt;4)-alpha-D-glucan chain to a primary hydroxy group in a similar glucan chain.. It participates in glycan biosynthesis; glycogen biosynthesis. Its function is as follows. Catalyzes the formation of the alpha-1,6-glucosidic linkages in glycogen by scission of a 1,4-alpha-linked oligosaccharide from growing alpha-1,4-glucan chains and the subsequent attachment of the oligosaccharide to the alpha-1,6 position. The chain is 1,4-alpha-glucan branching enzyme GlgB from Streptococcus agalactiae serotype III (strain NEM316).